We begin with the raw amino-acid sequence, 533 residues long: GDP-fucose protein O-fucosyltransferase 4 (533 aa).

Residues 1–20 (MSAGCTQLVWGGRLHWGASH) are Cytoplasmic-facing. A helical; Signal-anchor for type II membrane protein transmembrane segment spans residues 21 to 37 (LLSCLLALCALWVLAAA). Residues 38 to 533 (EPTEGGSANV…ETYIKRSMNH (496 aa)) are Lumenal-facing. N148, N206, and N358 each carry an N-linked (GlcNAc...) asparagine glycan. The cysteines at positions 429 and 432 are disulfide-linked. N511 carries N-linked (GlcNAc...) asparagine glycosylation.

This sequence belongs to the glycosyltransferase 10 family.

The protein localises to the endoplasmic reticulum membrane. It catalyses the reaction L-threonyl-[protein] + GDP-beta-L-fucose = 3-O-(alpha-L-fucosyl)-L-threonyl-[protein] + GDP + H(+). The enzyme catalyses L-seryl-[protein] + GDP-beta-L-fucose = 3-O-(alpha-L-fucosyl)-L-seryl-[protein] + GDP + H(+). It functions in the pathway protein modification; protein glycosylation. In terms of biological role, protein O-fucosyltransferase that specifically catalyzes O-fucosylation of serine or threonine residues in EMI domains of target proteins. Attaches fucose through an O-glycosidic linkage. O-fucosylation of EMI domain-containing proteins may be required for facilitating protein folding and secretion. The protein is GDP-fucose protein O-fucosyltransferase 4 (fut11) of Xenopus tropicalis (Western clawed frog).